The primary structure comprises 230 residues: Small ribosomal subunit protein uS3 (230 aa).

The 69-residue stretch at 39–107 (IRKFLTEKLK…PAQINISEVR (69 aa)) folds into the KH type-2 domain.

Belongs to the universal ribosomal protein uS3 family. Part of the 30S ribosomal subunit. Forms a tight complex with proteins S10 and S14.

In terms of biological role, binds the lower part of the 30S subunit head. Binds mRNA in the 70S ribosome, positioning it for translation. The chain is Small ribosomal subunit protein uS3 from Psychromonas ingrahamii (strain DSM 17664 / CCUG 51855 / 37).